A 107-amino-acid polypeptide reads, in one-letter code: Nucleoid-associated protein RC1337 (107 aa).

This sequence belongs to the YbaB/EbfC family. Homodimer.

It is found in the cytoplasm. The protein localises to the nucleoid. Its function is as follows. Binds to DNA and alters its conformation. May be involved in regulation of gene expression, nucleoid organization and DNA protection. The polypeptide is Nucleoid-associated protein RC1337 (Rickettsia conorii (strain ATCC VR-613 / Malish 7)).